We begin with the raw amino-acid sequence, 644 residues long: Exoribonuclease 2 (644 aa).

The 328-residue stretch at 189–516 (REDLTALDFV…NHRLLKAVIK (328 aa)) folds into the RNB domain. The 83-residue stretch at 561–643 (DTRFAAEIVD…ETRSIIARPV (83 aa)) folds into the S1 motif domain.

This sequence belongs to the RNR ribonuclease family. RNase II subfamily.

The protein resides in the cytoplasm. The enzyme catalyses Exonucleolytic cleavage in the 3'- to 5'-direction to yield nucleoside 5'-phosphates.. Functionally, involved in mRNA degradation. Hydrolyzes single-stranded polyribonucleotides processively in the 3' to 5' direction. In Escherichia coli O139:H28 (strain E24377A / ETEC), this protein is Exoribonuclease 2.